Here is a 572-residue protein sequence, read N- to C-terminus: Proline--tRNA ligase (572 aa).

This sequence belongs to the class-II aminoacyl-tRNA synthetase family. ProS type 1 subfamily. As to quaternary structure, homodimer. May form a tertiary complex with YbaK and t-RNA(Pro).

Its subcellular location is the cytoplasm. The enzyme catalyses tRNA(Pro) + L-proline + ATP = L-prolyl-tRNA(Pro) + AMP + diphosphate. Catalyzes the attachment of proline to tRNA(Pro) in a two-step reaction: proline is first activated by ATP to form Pro-AMP and then transferred to the acceptor end of tRNA(Pro). As ProRS can inadvertently accommodate and process non-cognate amino acids such as alanine and cysteine, to avoid such errors it has two additional distinct editing activities against alanine. One activity is designated as 'pretransfer' editing and involves the tRNA(Pro)-independent hydrolysis of activated Ala-AMP. The other activity is designated 'posttransfer' editing and involves deacylation of mischarged Ala-tRNA(Pro). The misacylated Cys-tRNA(Pro) is not edited by ProRS, but is probably edited in trans by YbaK. The chain is Proline--tRNA ligase from Haemophilus influenzae (strain ATCC 51907 / DSM 11121 / KW20 / Rd).